The sequence spans 222 residues: MAEAMSCSSEITEEFLCPVCQEILQTPVRTQTCRHVFCRKCFMLAMKSGGAYCPLCRGPVNKSERSAPVRATDIDLEMRMLSGGCMYCGKMMKLHYMKLHYKSCRKYQEEYGLSPKNVTIQTGQNSTKCQEPKYKCPLCSEHNLNQRSLLEHCNNVHYYEEVEMVCPICATLPWGDPIQTTGNVIAHLNARHQFNYQEFMNINIDEEAQFQIAVANSYKISR.

The RING-type zinc-finger motif lies at 17–57; sequence CPVCQEILQTPVRTQTCRHVFCRKCFMLAMKSGGAYCPLCR. C85, C88, H100, and C104 together coordinate Zn(2+). Residues 85–104 form a C2HC RNF-type zinc finger; the sequence is CMYCGKMMKLHYMKLHYKSC. C2H2-type zinc fingers lie at residues 134–157 and 164–192; these read YKCP…NNVH and MVCP…NARH. The UIM domain occupies 202–220; that stretch reads INIDEEAQFQIAVANSYKI.

In terms of assembly, interacts with nlk.2 (via C-terminus) and ube2k. Auto-ubiquitinated.

It is found in the chromosome. It catalyses the reaction S-ubiquitinyl-[E2 ubiquitin-conjugating enzyme]-L-cysteine + [acceptor protein]-L-lysine = [E2 ubiquitin-conjugating enzyme]-L-cysteine + N(6)-ubiquitinyl-[acceptor protein]-L-lysine.. It functions in the pathway protein modification; protein ubiquitination. In terms of biological role, E3 ubiquitin-protein ligase involved in DNA damage response by promoting DNA resection and homologous recombination. Recruited to sites of double-strand breaks following DNA damage and specifically promotes double-strand break repair via homologous recombination. Together with nlk.2, involved in the ubiquitination and degradation of TCF/LEF. Also exhibits auto-ubiquitination activity in combination with ube2k. May act as a negative regulator in the Wnt/beta-catenin-mediated signaling pathway. The sequence is that of E3 ubiquitin-protein ligase RNF138 (rnf138) from Xenopus laevis (African clawed frog).